Here is a 320-residue protein sequence, read N- to C-terminus: GPI-specific phospholipase A2-like PGAP3 (320 aa).

Positions 1 to 23 (MAKRTAPLLLLTLAVGLAGGSQG) are cleaved as a signal peptide. The Lumenal portion of the chain corresponds to 24–98 (DREPVYRDCV…QFHGKWPFSR (75 aa)). Asn-40 carries an N-linked (GlcNAc...) asparagine glycan. A helical membrane pass occupies residues 99–119 (FLFIQEPASAVASLLNGLASL). Over 120–135 (VMLCRYRASVPASSPM) the chain is Cytoplasmic. The helical transmembrane segment at 136–156 (YHTCMAFAWVSLNAWFWSTVF) threads the bilayer. The Lumenal segment spans residues 157–169 (HTRDTDLTEKMDY). The chain crosses the membrane as a helical span at residues 170-190 (FCASAVILHSVYLCCVRTVGL). The Cytoplasmic portion of the chain corresponds to 191–198 (QHPSVASA). The helical transmembrane segment at 199–219 (FGALLLLLLTGHISYLSLVHF) threads the bilayer. The Lumenal portion of the chain corresponds to 220–223 (DYGY). The chain crosses the membrane as a helical span at residues 224 to 244 (NMMANVAIGLVNLAWWLVWCL). Residues 245 to 257 (RNRQRLPHTRRCM) lie on the Cytoplasmic side of the membrane. Residues 258–278 (VVVVLLQGLSLLELLDFPPLF) form a helical membrane-spanning segment. A topological domain (lumenal) is located at residue Trp-279. The helical transmembrane segment at 280 to 299 (VLDAHAIWHISTIPVHTLFF) threads the bilayer. Residues 300–320 (RFLEDDSLYLLKESGAMFKLD) are Cytoplasmic-facing.

The protein belongs to the PGAP3 family.

The protein localises to the golgi apparatus membrane. Involved in the fatty acid remodeling steps of GPI-anchor maturation where the unsaturated acyl chain at sn-2 of inositol phosphate is replaced by a saturated stearoyl chain. May catalyze the first step of the fatty acid remodeling, by removing the unsaturated acyl chain at sn-2 of inositol phosphate, generating a lyso-GPI intermediate. The fatty acid remodeling steps is critical for the integration of GPI-APs into lipid rafts. The protein is GPI-specific phospholipase A2-like PGAP3 of Mus musculus (Mouse).